Here is a 196-residue protein sequence, read N- to C-terminus: Peroxynitrite isomerase (196 aa).

The GXWXGXG motif lies at 46 to 52; that stretch reads GVWRGRG. Residue His-186 coordinates heme b.

Belongs to the nitrobindin family. In terms of assembly, homodimer. The cofactor is heme b.

It carries out the reaction peroxynitrite = nitrate. The protein operates within nitrogen metabolism. In terms of biological role, heme-binding protein able to scavenge peroxynitrite and to protect free L-tyrosine against peroxynitrite-mediated nitration, by acting as a peroxynitrite isomerase that converts peroxynitrite to nitrate. Therefore, this protein likely plays a role in peroxynitrite sensing and in the detoxification of reactive nitrogen and oxygen species (RNS and ROS, respectively). Is able to bind nitric oxide (NO) in vitro, but may act as a sensor of peroxynitrite levels in vivo. This is Peroxynitrite isomerase from Salinispora tropica (strain ATCC BAA-916 / DSM 44818 / JCM 13857 / NBRC 105044 / CNB-440).